The chain runs to 880 residues: A-adding tRNA nucleotidyltransferase (880 aa).

2 CBS domains span residues Met315–Val373 and Met377–Glu435. Residue Gly487 to Arg490 coordinates ATP. Mg(2+)-binding residues include Asp500 and Asp502. Residues Arg574–Asp575, Asn579, Asp619–Arg628, Arg632, and Arg661 each bind ATP.

Belongs to the tRNA nucleotidyltransferase/poly(A) polymerase family. It depends on Mg(2+) as a cofactor.

The enzyme catalyses a tRNA with a 3' CC end + ATP = a tRNA with a 3' CCA end + diphosphate. Functionally, tRNA nucleotidyltransferase involved in the synthesis of the tRNA CCA terminus. Adds the terminal adenosine residue to tRNA. This Geobacter sulfurreducens (strain ATCC 51573 / DSM 12127 / PCA) protein is A-adding tRNA nucleotidyltransferase.